We begin with the raw amino-acid sequence, 431 residues long: Enolase (431 aa).

(2R)-2-phosphoglycerate is bound at residue Gln167. Residue Glu209 is the Proton donor of the active site. The Mg(2+) site is built by Asp246, Glu290, and Asp317. The (2R)-2-phosphoglycerate site is built by Lys342, Arg371, Ser372, and Lys393. The Proton acceptor role is filled by Lys342.

Belongs to the enolase family. Component of the RNA degradosome, a multiprotein complex involved in RNA processing and mRNA degradation. The cofactor is Mg(2+).

Its subcellular location is the cytoplasm. It is found in the secreted. The protein resides in the cell surface. The enzyme catalyses (2R)-2-phosphoglycerate = phosphoenolpyruvate + H2O. It functions in the pathway carbohydrate degradation; glycolysis; pyruvate from D-glyceraldehyde 3-phosphate: step 4/5. Its function is as follows. Catalyzes the reversible conversion of 2-phosphoglycerate (2-PG) into phosphoenolpyruvate (PEP). It is essential for the degradation of carbohydrates via glycolysis. This Serratia proteamaculans (strain 568) protein is Enolase.